The chain runs to 179 residues: Inner membrane-spanning protein YciB (179 aa).

5 helical membrane-spanning segments follow: residues 22–42 (IYAA…YSWV), 50–70 (MALI…FFHN), 76–96 (WKVT…QWVM), 121–141 (LAWA…AFWL), and 149–169 (FKVF…GIYI).

This sequence belongs to the YciB family.

It is found in the cell inner membrane. Its function is as follows. Plays a role in cell envelope biogenesis, maintenance of cell envelope integrity and membrane homeostasis. The protein is Inner membrane-spanning protein YciB of Klebsiella pneumoniae subsp. pneumoniae (strain ATCC 700721 / MGH 78578).